Reading from the N-terminus, the 87-residue chain is Large ribosomal subunit protein bL27 (87 aa).

A compositionally biased stretch (polar residues) spans 1 to 11 (MASKASGGSTR). The interval 1–21 (MASKASGGSTRNGRDSNSKRL) is disordered.

Belongs to the bacterial ribosomal protein bL27 family.

This Hydrogenobaculum sp. (strain Y04AAS1) protein is Large ribosomal subunit protein bL27.